A 316-amino-acid chain; its full sequence is 33 kDa chaperonin (316 aa).

Cystine bridges form between cysteine 239-cysteine 241 and cysteine 272-cysteine 275.

Belongs to the HSP33 family. In terms of processing, under oxidizing conditions two disulfide bonds are formed involving the reactive cysteines. Under reducing conditions zinc is bound to the reactive cysteines and the protein is inactive.

It localises to the cytoplasm. Its function is as follows. Redox regulated molecular chaperone. Protects both thermally unfolding and oxidatively damaged proteins from irreversible aggregation. Plays an important role in the bacterial defense system toward oxidative stress. The polypeptide is 33 kDa chaperonin (Clostridium perfringens (strain SM101 / Type A)).